The following is a 35-amino-acid chain: MSDIN-like toxin proprotein 1 (35 aa).

Positions 1–10 (MSDINATRLP) are excised as a propeptide. The cyclopeptide (Ile-Pro) cross-link spans 11–20 (IIIVLGLIIP). Positions 21-35 (LCVSDIEMILTRGER) are excised as a propeptide.

It belongs to the MSDIN fungal toxin family. Post-translationally, processed by the macrocyclase-peptidase enzyme POPB to yield a toxic cyclic decapeptide. POPB first removes 10 residues from the N-terminus. Conformational trapping of the remaining peptide forces the enzyme to release this intermediate rather than proceed to macrocyclization. The enzyme rebinds the remaining peptide in a different conformation and catalyzes macrocyclization of the N-terminal 10 residues.

Probable toxin that belongs to the MSDIN-like toxin family responsible for a large number of food poisoning cases and deaths. This Amanita rimosa protein is MSDIN-like toxin proprotein 1.